The sequence spans 222 residues: C-8 sterol isomerase ERG2 (222 aa).

Residues 3–23 (FFPLLLLIGVVGYIMNVLFTT) traverse the membrane as a helical segment.

Belongs to the ERG2 family.

The protein localises to the endoplasmic reticulum membrane. The enzyme catalyses fecosterol = episterol. It functions in the pathway steroid metabolism; ergosterol biosynthesis; ergosterol from zymosterol: step 2/5. Its activity is regulated as follows. Catalytic activity is inhibited by the morphilines tridemorph, fenpropimorph, and fenpropidin. In terms of biological role, C-8 sterol isomerase; part of the third module of ergosterol biosynthesis pathway that includes the late steps of the pathway. ERG2 catalyzes the reaction which results in unsaturation at C-7 in the B ring of sterols and thus converts fecosterol to episterol. The third module or late pathway involves the ergosterol synthesis itself through consecutive reactions that mainly occur in the endoplasmic reticulum (ER) membrane. Firstly, the squalene synthase ERG9 catalyzes the condensation of 2 farnesyl pyrophosphate moieties to form squalene, which is the precursor of all steroids. Squalene synthase is crucial for balancing the incorporation of farnesyl diphosphate (FPP) into sterol and nonsterol isoprene synthesis. Secondly, the squalene epoxidase ERG1 catalyzes the stereospecific oxidation of squalene to (S)-2,3-epoxysqualene, which is considered to be a rate-limiting enzyme in steroid biosynthesis. Then, the lanosterol synthase ERG7 catalyzes the cyclization of (S)-2,3 oxidosqualene to lanosterol, a reaction that forms the sterol core. In the next steps, lanosterol is transformed to zymosterol through a complex process involving various demethylation, reduction and desaturation reactions. The lanosterol 14-alpha-demethylase ERG11 (also known as CYP51) catalyzes C14-demethylation of lanosterol to produce 4,4'-dimethyl cholesta-8,14,24-triene-3-beta-ol, which is critical for ergosterol biosynthesis. The C-14 reductase ERG24 reduces the C14=C15 double bond of 4,4-dimethyl-cholesta-8,14,24-trienol to produce 4,4-dimethyl-cholesta-8,24-dienol. 4,4-dimethyl-cholesta-8,24-dienol is substrate of the C-4 demethylation complex ERG25-ERG26-ERG27 in which ERG25 catalyzes the three-step monooxygenation required for the demethylation of 4,4-dimethyl and 4alpha-methylsterols, ERG26 catalyzes the oxidative decarboxylation that results in a reduction of the 3-beta-hydroxy group at the C-3 carbon to an oxo group, and ERG27 is responsible for the reduction of the keto group on the C-3. ERG28 has a role as a scaffold to help anchor ERG25, ERG26 and ERG27 to the endoplasmic reticulum and ERG29 regulates the activity of the iron-containing C4-methylsterol oxidase ERG25. Then, the sterol 24-C-methyltransferase ERG6 catalyzes the methyl transfer from S-adenosyl-methionine to the C-24 of zymosterol to form fecosterol. The C-8 sterol isomerase ERG2 catalyzes the reaction which results in unsaturation at C-7 in the B ring of sterols and thus converts fecosterol to episterol. The sterol-C5-desaturase ERG3 then catalyzes the introduction of a C-5 double bond in the B ring to produce 5-dehydroepisterol. The C-22 sterol desaturase ERG5 further converts 5-dehydroepisterol into ergosta-5,7,22,24(28)-tetraen-3beta-ol by forming the C-22(23) double bond in the sterol side chain. Finally, ergosta-5,7,22,24(28)-tetraen-3beta-ol is substrate of the C-24(28) sterol reductase ERG4 to produce ergosterol. In Saccharomyces cerevisiae (strain ATCC 204508 / S288c) (Baker's yeast), this protein is C-8 sterol isomerase ERG2.